The sequence spans 192 residues: Probable nicotinate-nucleotide adenylyltransferase (192 aa).

The protein belongs to the NadD family.

It catalyses the reaction nicotinate beta-D-ribonucleotide + ATP + H(+) = deamido-NAD(+) + diphosphate. It functions in the pathway cofactor biosynthesis; NAD(+) biosynthesis; deamido-NAD(+) from nicotinate D-ribonucleotide: step 1/1. Functionally, catalyzes the reversible adenylation of nicotinate mononucleotide (NaMN) to nicotinic acid adenine dinucleotide (NaAD). In Rhizobium leguminosarum bv. trifolii (strain WSM2304), this protein is Probable nicotinate-nucleotide adenylyltransferase.